The primary structure comprises 69 residues: Conotoxin Cal12.1p4 (69 aa).

A propeptide spanning residues 1-23 (DLITNSYTRGKPRHVTSWRNLKT) is cleaved from the precursor.

Contains 4 disulfide bonds. As to expression, expressed by the venom duct.

It is found in the secreted. The polypeptide is Conotoxin Cal12.1p4 (Californiconus californicus (California cone)).